The following is a 349-amino-acid chain: PDZ and LIM domain protein 2 (349 aa).

The PDZ domain occupies 1–84 (MALTVNVVGP…PLRLQLDRSQ (84 aa)). Disordered stretches follow at residues 72–95 (SASP…NGEG) and 108–147 (LRTH…PIAL). 2 stretches are compositionally biased toward polar residues: residues 81–90 (DRSQTASPGQ) and 108–121 (LRTH…QRSA). Ser-124, Ser-127, Ser-129, Ser-134, and Ser-137 each carry phosphoserine. A phosphothreonine mark is found at Thr-138 and Thr-142. 2 positions are modified to phosphoserine: Ser-143 and Ser-163. Disordered regions lie at residues 168-212 (ATHH…SSLD) and 250-272 (ERGG…PTSR). The segment covering 176–192 (GQPTSQQAGHSSPSDST) has biased composition (polar residues). Phosphoserine is present on residues Ser-199, Ser-204, Ser-205, Ser-209, Ser-210, and Ser-263. Over residues 199-211 (SPGRPSSPRLSSL) the composition is skewed to low complexity. The span at 260-270 (SSLSPKASLPT) shows a compositional bias: polar residues. Residues 281-341 (HTCEKCSVNI…EKHARQRYSM (61 aa)) form the LIM zinc-binding domain.

In terms of assembly, interacts with alpha-actinins ACTN1 and ACTN4, FLNA and MYH9. Interacts (via LIM zinc-binding domain) with MKRN2. In terms of tissue distribution, highly expressed in cornea and lung. Expressed at intermediate level in sclera and combined tissues of the eye irido-corneal angle. Specifically expressed in the corneal epithelial cells but not in other corneal layers.

It is found in the cytoplasm. Its subcellular location is the cytoskeleton. In terms of biological role, probable adapter protein located at the actin cytoskeleton that promotes cell attachment. Necessary for the migratory capacity of epithelial cells. Overexpression enhances cell adhesion to collagen and fibronectin and suppresses anchorage independent growth. May contribute to tumor cell migratory capacity. This is PDZ and LIM domain protein 2 (Pdlim2) from Rattus norvegicus (Rat).